A 559-amino-acid polypeptide reads, in one-letter code: MSQASSSPGEGPSSEAAAISEAEAASGSFGRLHCQVLRLITNVEGGSLEAGRLRLLDLRTNIEVSRPSVLCCFQENKSPHDTVDLTDLNIKGRCVVGEQDRLLVDLNNFGPRRLTPGSENNTVSVLAFALPLDRVPVSGLHLFQSQRRGGEENRPRMEARAIIRRTAHHWAVRLTVTPNWRRRTDSSLEAGQIFVSQFAFRAGAIPLTLVDALEQLACSDPNTYIHKTETDERGQWIMLFLHHDSPHPPTSVFLHFSVYTHRAEVVARHNPYPHLRRLPDNGFQLLIPKSFTLTRIHPEYIVQIQNAFETNQTHDTIFFPENIPGVSIEAGPLPDRVRITLRVTLTGDQAVHLEHRQPLGRIHFFRRGFWTLTPGKPDKIKRPQVQLRAGLFPRSNVMRGAVSEFLPQSPGLPPTEEEEEEEEEDDEDDLSSTPTPTPLSEAMFAGFEEASGDEDSDTQAGLSPALILTGQRRRSGNNGALTLVIPSWHVFASLDDLVPLTVSVQHAALRPTSYLRSDMDGDVRTAADISSTLRSVPAPRPSPISTASTSSTPRSRPRI.

C218 is modified (S-nitrosocysteine; by host). T223 carries the phosphothreonine modification. 2 disordered regions span residues 404-440 (EFLP…TPLS) and 530-559 (SSTL…RPRI). A compositionally biased stretch (acidic residues) spans 415–430 (TEEEEEEEEEDDEDDL). Low complexity-rich tracts occupy residues 431–440 (SSTPTPTPLS) and 543–559 (PIST…RPRI).

Belongs to the herpesviridae pp71 family. As to quaternary structure, interacts with the host protein DAXX; this interaction takes place at ND10 and induces the reversal of DAXX-mediated repression of viral transcription. Interacts with UL35. Interacts with host TMEM173/STING1; this interaction inhibits the cGAS/STING pathway. Interacts with host RB1; this interaction mediates RB1 proteasomal degradation. In terms of processing, S-nitrosylation limits ability to undermine the cGAS/STING antiviral pathway.

It localises to the virion tegument. The protein localises to the host nucleus. It is found in the host endoplasmic reticulum. Functionally, stimulates viral immediate-early (IE) transcription. Plays a role in the inhibition of the host innate repsonse by targeting STING1 and thus the cGAS-STING pathway. Also counteracts host DAXX-mediated repression of viral transcription. Displaces a DAXX-binding protein, ATRX, from nuclear domain 10 sites (ND10) shortly after infection. Increases the basal level of SUMOylated DAXX in infected cells. Stimulates quiescent cells to re-enter the cell cycle, proceed through G1 and enter the S phase. Interacts with hypophosphorylated forms of RB1 and induces their degradation by the proteasome without involving ubiquitin conjugation. In Human cytomegalovirus (strain AD169) (HHV-5), this protein is Protein pp71 (UL82).